The following is a 207-amino-acid chain: LPS-assembly lipoprotein LptE (207 aa).

The signal sequence occupies residues 1–19 (MRHRILTLLLGLAVLVTAG). A lipid anchor (N-palmitoyl cysteine) is attached at C20. Residue C20 is the site of S-diacylglycerol cysteine attachment. The interval 168–207 (KNTQKNGDKPVSDANAAQGSTPTAVNETTLGEPAVSTSAK) is disordered. The segment covering 182 to 207 (NAAQGSTPTAVNETTLGEPAVSTSAK) has biased composition (polar residues).

The protein belongs to the LptE lipoprotein family. Component of the lipopolysaccharide transport and assembly complex. Interacts with LptD.

It localises to the cell outer membrane. Together with LptD, is involved in the assembly of lipopolysaccharide (LPS) at the surface of the outer membrane. Required for the proper assembly of LptD. Binds LPS and may serve as the LPS recognition site at the outer membrane. The polypeptide is LPS-assembly lipoprotein LptE (Yersinia pseudotuberculosis serotype O:1b (strain IP 31758)).